The primary structure comprises 305 residues: UDP-3-O-acyl-N-acetylglucosamine deacetylase (305 aa).

3 residues coordinate Zn(2+): His78, His237, and Asp241. His264 acts as the Proton donor in catalysis.

Belongs to the LpxC family. Zn(2+) is required as a cofactor.

The catalysed reaction is a UDP-3-O-[(3R)-3-hydroxyacyl]-N-acetyl-alpha-D-glucosamine + H2O = a UDP-3-O-[(3R)-3-hydroxyacyl]-alpha-D-glucosamine + acetate. The protein operates within glycolipid biosynthesis; lipid IV(A) biosynthesis; lipid IV(A) from (3R)-3-hydroxytetradecanoyl-[acyl-carrier-protein] and UDP-N-acetyl-alpha-D-glucosamine: step 2/6. Catalyzes the hydrolysis of UDP-3-O-myristoyl-N-acetylglucosamine to form UDP-3-O-myristoylglucosamine and acetate, the committed step in lipid A biosynthesis. This Cupriavidus pinatubonensis (strain JMP 134 / LMG 1197) (Cupriavidus necator (strain JMP 134)) protein is UDP-3-O-acyl-N-acetylglucosamine deacetylase.